Here is a 964-residue protein sequence, read N- to C-terminus: Glycine dehydrogenase (decarboxylating) (964 aa).

Over residues 1-11 (MNSTLQNQTKT) the composition is skewed to polar residues. The disordered stretch occupies residues 1-21 (MNSTLQNQTKTNLEKVGTDPL). Position 713 is an N6-(pyridoxal phosphate)lysine (Lys-713).

This sequence belongs to the GcvP family. The glycine cleavage system is composed of four proteins: P, T, L and H. Pyridoxal 5'-phosphate is required as a cofactor.

It carries out the reaction N(6)-[(R)-lipoyl]-L-lysyl-[glycine-cleavage complex H protein] + glycine + H(+) = N(6)-[(R)-S(8)-aminomethyldihydrolipoyl]-L-lysyl-[glycine-cleavage complex H protein] + CO2. In terms of biological role, the glycine cleavage system catalyzes the degradation of glycine. The P protein binds the alpha-amino group of glycine through its pyridoxal phosphate cofactor; CO(2) is released and the remaining methylamine moiety is then transferred to the lipoamide cofactor of the H protein. In Leptospira interrogans serogroup Icterohaemorrhagiae serovar copenhageni (strain Fiocruz L1-130), this protein is Glycine dehydrogenase (decarboxylating).